The primary structure comprises 663 residues: Polyunsaturated fatty acid lipoxygenase ALOX15 (663 aa).

A PLAT domain is found at G2–R115. Residues T116 to I663 enclose the Lipoxygenase domain. Positions 361, 366, 541, 545, and 663 each coordinate Fe cation.

The protein belongs to the lipoxygenase family. As to quaternary structure, interacts with PEBP1; in response to IL13/interleukin-13, prevents the interaction of PEBP1 with RAF1 to activate the ERK signaling cascade. Fe cation serves as cofactor.

The protein resides in the cytoplasm. Its subcellular location is the cytosol. It is found in the cell membrane. It localises to the lipid droplet. The catalysed reaction is (5Z,8Z,11Z,14Z)-eicosatetraenoate + O2 = (12S)-hydroperoxy-(5Z,8Z,10E,14Z)-eicosatetraenoate. It carries out the reaction (5Z,8Z,11Z,14Z)-eicosatetraenoate + O2 = (15S)-hydroperoxy-(5Z,8Z,11Z,13E)-eicosatetraenoate. It catalyses the reaction (9Z,12Z)-octadecadienoate + O2 = (13S)-hydroperoxy-(9Z,11E)-octadecadienoate. The enzyme catalyses (5Z,8Z,11Z,14Z)-eicosatetraenoate + 2 O2 = (14R,15S)-dihydroperoxy-(5Z,8Z,10E,12E)-eicosatetraenoate. The catalysed reaction is (5Z,8Z,11Z,14Z)-eicosatetraenoate + 2 O2 = (8S,15S)-dihydroperoxy-(5Z,9E,11Z,13E)-eicosatetraenoate. It carries out the reaction (14S,15R)-epoxy-(5Z,8Z,11Z)-eicosatrienoate + O2 = (8S)-hydroperoxy-(14S,15R)-epoxy-(5Z,9E,11Z)-eicosatrienoate. It catalyses the reaction (14S,15R)-epoxy-(5Z,8Z,11Z)-eicosatrienoate + O2 = (12S)-hydroperoxy-(14S,15R)-epoxy-(5Z,8Z,10E)-eicosatrienoate. The enzyme catalyses (14R,15S)-epoxy-(5Z,8Z,11Z)-eicosatrienoate + O2 = (5S)-hydroperoxy-(14R,15S)-epoxy-(6E,8Z,11Z)-eicosatrienoate. The catalysed reaction is (14R,15S)-epoxy-(5Z,8Z,11Z)-eicosatrienoate + O2 = (12S)-hydroperoxy-(14R,15S)-epoxy-(5Z,8Z,10E)-eicosatrienoate. It carries out the reaction (15R)-hydroperoxy-(5Z,8Z,11Z,13E)-eicosatetraenoate = 15-oxo-(5Z,8Z,11Z,13E)-eicosatetraenoate + H2O. It catalyses the reaction (15S)-hydroperoxy-(5Z,8Z,11Z,13E)-eicosatetraenoate = (14S,15S)-epoxy-(5Z,8Z,10E,12E)-eicosatetraenoate + H2O. The enzyme catalyses (12S)-hydroperoxy-(5Z,8Z,10E,14Z)-eicosatetraenoate = (8S)-hydroxy-(11S,12S)-epoxy-(5Z,9E,14Z)-eicosatrienoate. The catalysed reaction is (4Z,7Z,10Z,13Z,16Z,19Z)-docosahexaenoate + O2 = 14-hydroperoxy-(4Z,7Z,10Z,12E,16Z,19Z)-docosahexaenoate. It carries out the reaction (4Z,7Z,10Z,13Z,16Z)-docosapentaenoate + O2 = 14-hydroperoxy-(4Z,7Z,10Z,12E,16Z)-docosapentaenoate. It catalyses the reaction (7Z,10Z,13Z,16Z,19Z)-docosapentaenoate + O2 = 14-hydroperoxy-(7Z,10Z,12E,16Z,19Z)-docosapentaenoate. The enzyme catalyses (4Z,7Z,10Z,13Z,16Z,19Z)-docosahexaenoate + O2 = (14S)-hydroperoxy-(4Z,7Z,10Z,12E,16Z,19Z)-docosahexaenoate. The catalysed reaction is (4Z,7Z,10Z,13Z,16Z,19Z)-docosahexaenoate + O2 = (17S)-hydroperoxy-(4Z,7Z,10Z,13Z,15E,19Z)-docosahexaenoate. It carries out the reaction (7S)-hydroperoxy-(4Z,8E,10Z,13Z,16Z,19Z)-docosahexaenoate + O2 = (7S,14S)-dihydroperoxy-(4Z,8E,10Z,12E,16Z,19Z)-docosahexaenoate. It catalyses the reaction (7S)-hydroperoxy-(4Z,8E,10Z,13Z,16Z,19Z)-docosahexaenoate + O2 = (7S,17S)-dihydroperoxy-(4Z,8E,10Z,13Z,15E,19Z)-docosahexaenoate. The enzyme catalyses (4Z,7Z,10Z,13Z,16Z,19Z)-docosahexaenoate + O2 = (11S)-hydroperoxy-(4Z,7Z,9E,13Z,16Z,19Z)-docosahexaenoate. The catalysed reaction is N-(5Z,8Z,11Z,14Z)-eicosatetraenoyl-taurine + O2 = N-(12S)-hydroperoxy-(5Z,8Z,10E,14Z)-eicosatetraenoyl-taurine. It carries out the reaction N-(5Z,8Z,11Z,14Z)-eicosatetraenoyl-gamma-aminobutanoate + O2 = N-(12S)-hydroperoxy-(5Z,8Z,10E,14Z)-eicosatetraenoyl-gamma-aminobutanoate. It catalyses the reaction N-(5Z,8Z,11Z,14Z)-eicosatetraenoyl-glycine + O2 = N-(12S)-hydroperoxy-(5Z,8Z,10E,14Z)-eicosatetraenoyl-glycine. The enzyme catalyses N-(5Z,8Z,11Z,14Z)-eicosatetraenoyl-L-alanine + O2 = N-(12S)-hydroperoxy-(5Z,8Z,10E,14Z)-eicosatetraenoyl-alanine. The catalysed reaction is N-(5Z,8Z,11Z,14Z)-eicosatetraenoyl-taurine + O2 = N-(15S)-hydroperoxy-(5Z,8Z,11Z,13E)-eicosatetraenoyl-taurine. It carries out the reaction N-(5Z,8Z,11Z,14Z)-eicosatetraenoyl-gamma-aminobutanoate + O2 = N-(15S)-hydroperoxy-(5Z,8Z,11Z,13E)-eicosatetraenoyl-gamma-aminobutanoate. It catalyses the reaction N-(5Z,8Z,11Z,14Z)-eicosatetraenoyl-glycine + O2 = N-(15S)-hydroperoxy-(5Z,8Z,11Z,13E)-eicosatetraenoyl-glycine. The enzyme catalyses N-(5Z,8Z,11Z,14Z)-eicosatetraenoyl-L-alanine + O2 = N-(15S)-hydroperoxy-(5Z,8Z,11Z,13E)-eicosatetraenoyl-alanine. It participates in lipid metabolism; hydroperoxy eicosatetraenoic acid biosynthesis. In terms of biological role, non-heme iron-containing dioxygenase that catalyzes the stereo-specific peroxidation of free and esterified polyunsaturated fatty acids generating a spectrum of bioactive lipid mediators. It inserts peroxyl groups at C12 or C15 of arachidonate ((5Z,8Z,11Z,14Z)-eicosatetraenoate) producing both 12-hydroperoxyeicosatetraenoate/12-HPETE and 15-hydroperoxyeicosatetraenoate/15-HPETE. It may then act on 12-HPETE to produce hepoxilins, which may show pro-inflammatory properties. Can also peroxidize linoleate ((9Z,12Z)-octadecadienoate) to 13-hydroperoxyoctadecadienoate. May participate in the sequential oxidations of DHA ((4Z,7Z,10Z,13Z,16Z,19Z)-docosahexaenoate) to generate specialized pro-resolving mediators (SPMs)like resolvin D5 ((7S,17S)-diHPDHA) and (7S,14S)-diHPDHA, that actively down-regulate the immune response and have anti-aggregation properties with platelets. Can convert epoxy fatty acids to hydroperoxy-epoxides derivatives followed by an intramolecular nucleophilic substitution leading to the formation of monocyclic endoperoxides. Plays an important role during the maintenance of self-tolerance by peroxidizing membrane-bound phosphatidylethanolamine which can then signal the sorting process for clearance of apoptotic cells during inflammation and prevent an autoimmune response. In addition to its role in the immune and inflammatory responses, this enzyme may play a role in epithelial wound healing in the cornea through production of lipoxin A4 (LXA(4)) and docosahexaenoic acid-derived neuroprotectin D1 (NPD1; 10R,17S-HDHA), both lipid autacoids exhibit anti-inflammatory and neuroprotective properties. Furthermore, it may regulate actin polymerization which is crucial for several biological processes such as the phagocytosis of apoptotic cells. It is also implicated in the generation of endogenous ligands for peroxisome proliferator activated receptor (PPAR-gamma), hence modulating macrophage development and function. It may also exert a negative effect on skeletal development by regulating bone mass through this pathway. As well as participates in ER stress and downstream inflammation in adipocytes, pancreatic islets, and liver. Finally, it is also involved in the cellular response to IL13/interleukin-13. This chain is Polyunsaturated fatty acid lipoxygenase ALOX15, found in Sus scrofa (Pig).